We begin with the raw amino-acid sequence, 370 residues long: Mitogen-activated protein kinase 3 (370 aa).

The region spanning 38-324 is the Protein kinase domain; that stretch reads RPPIIPIGRG…VEQALNHQYL (287 aa). ATP contacts are provided by residues 44-52 and Lys-67; that span reads IGRGAYGIV. Asp-164 serves as the catalytic Proton acceptor. Phosphothreonine is present on Thr-196. The TXY signature appears at 196 to 198; sequence TEY. Tyr-198 carries the post-translational modification Phosphotyrosine. Residue Thr-201 is modified to Phosphothreonine.

It belongs to the protein kinase superfamily. CMGC Ser/Thr protein kinase family. MAP kinase subfamily. Interacts with DSPTP1B/MKP2, NDPK2 and VIP1. The interaction with DSPTP1B/MKP2 is repressed by fungal elicitation. Binds to LIP5. Interacts with VQ4. Interacts with RACK1A, RACK1B and RACK1C. Interacts with FLZ9. Interacts with MKK5. Dually phosphorylated on Thr-196 and Tyr-198, which activates the enzyme. Dephosphorylated by DSPTP1B/MKP2.

It is found in the cytoplasm. It localises to the nucleus. Its subcellular location is the cell cortex. It catalyses the reaction L-seryl-[protein] + ATP = O-phospho-L-seryl-[protein] + ADP + H(+). The enzyme catalyses L-threonyl-[protein] + ATP = O-phospho-L-threonyl-[protein] + ADP + H(+). Activated by threonine and tyrosine phosphorylation. Activated by MAP kinase kinases MKK4, MKK5, MKK7 and MKK9. Activated in response to hydrogen peroxide, ozone, salt stress and flagellin bacterial elicitor. Triggered by Agrobacterium upon T-DNA transfer. Repressed by DSPTP1B/MKP2-mediated dephosphorylation. Functionally, involved in oxidative stress-mediated signaling cascade (such as ozone). Involved in the innate immune MAP kinase signaling cascade (MEKK1, MKK4/MKK5 and MPK3/MPK6) downstream of bacterial flagellin receptor FLS2. May be involved in hypersensitive response (HR)-mediated signaling cascade by modulating LIP5 phosphorylation and subsequent multivesicular bodies (MVBs) trafficking. May phosphorylate regulators of WRKY transcription factors. Mediates the phosphorylation of VIP1 and subsequent stress genes transcription in response to Agrobacterium. MKK9-MPK3/MPK6 module phosphorylates and activates EIN3, leading to the promotion of EIN3-mediated transcription in ethylene signaling. MPK3/MPK6 cascade regulates camalexin synthesis through transcriptional regulation of the biosynthetic genes after pathogen infection. YDA-MKK4/MKK5-MPK3/MPK6 module regulates stomatal cell fate before the guard mother cell (GMC) is specified. When activated, reinforces the feedback loop by phosphorylating BASL, and inhibits stomatal fate by phosphorylating SPCH. This MAPK cascade also functions downstream of the ER receptor in regulating coordinated local cell proliferation, which shapes the morphology of plant organs. This Arabidopsis thaliana (Mouse-ear cress) protein is Mitogen-activated protein kinase 3.